The sequence spans 675 residues: DNA ligase (675 aa).

NAD(+) contacts are provided by residues 41-45 (DAEYD), 90-91 (SL), and glutamate 120. Lysine 122 acts as the N6-AMP-lysine intermediate in catalysis. NAD(+) contacts are provided by arginine 143, glutamate 178, lysine 295, and lysine 319. Residues cysteine 413, cysteine 416, cysteine 431, and cysteine 436 each contribute to the Zn(2+) site. Residues 596-675 (GVPQTFAGKT…ADFLQLIDRV (80 aa)) enclose the BRCT domain.

The protein belongs to the NAD-dependent DNA ligase family. LigA subfamily. Mg(2+) is required as a cofactor. It depends on Mn(2+) as a cofactor.

It carries out the reaction NAD(+) + (deoxyribonucleotide)n-3'-hydroxyl + 5'-phospho-(deoxyribonucleotide)m = (deoxyribonucleotide)n+m + AMP + beta-nicotinamide D-nucleotide.. Functionally, DNA ligase that catalyzes the formation of phosphodiester linkages between 5'-phosphoryl and 3'-hydroxyl groups in double-stranded DNA using NAD as a coenzyme and as the energy source for the reaction. It is essential for DNA replication and repair of damaged DNA. In Heliobacterium modesticaldum (strain ATCC 51547 / Ice1), this protein is DNA ligase.